The sequence spans 297 residues: Ribosomal RNA small subunit methyltransferase H (297 aa).

S-adenosyl-L-methionine is bound by residues 34–36 (GGH), Asp-54, Phe-81, Asp-99, and Gln-106.

Belongs to the methyltransferase superfamily. RsmH family.

Its subcellular location is the cytoplasm. The catalysed reaction is cytidine(1402) in 16S rRNA + S-adenosyl-L-methionine = N(4)-methylcytidine(1402) in 16S rRNA + S-adenosyl-L-homocysteine + H(+). In terms of biological role, specifically methylates the N4 position of cytidine in position 1402 (C1402) of 16S rRNA. In Chlamydia pneumoniae (Chlamydophila pneumoniae), this protein is Ribosomal RNA small subunit methyltransferase H.